A 300-amino-acid polypeptide reads, in one-letter code: Interferon-stimulated gene 20 kDa protein (300 aa).

Positions 11, 13, 90, and 93 each coordinate Mn(2+).

Belongs to the exonuclease superfamily. As to quaternary structure, associates with PML and SP100 in the PML NB complex. Associates with survival motor neuron protein (SMN)-containing macromolecular nuclear complexes and U1 and U2 snRNAs and U3 snoRNA. Requires Mn(2+) as cofactor.

It localises to the nucleus. The protein resides in the nucleolus. The protein localises to the cytoplasm. It is found in the cajal body. Its subcellular location is the P-body. The enzyme catalyses Exonucleolytic cleavage in the 3'- to 5'-direction to yield nucleoside 5'-phosphates.. Functionally, interferon-induced antiviral exoribonuclease that acts mainly on single-stranded RNA. Inhibition of several viruses does not involve the degradation of viral RNAs, but rather the inhibition of translation of viral proteins. Exerts a translational control over a large panel of non-self RNA substrates while sparing endogenous transcripts. This activity correlates with the protein's ability to localize in cytoplasmic processing bodies. May also act as master regulator of over hundred interferon stimulated genes leading to viral genome translation inhibition. May play additional roles in the maturation of snRNAs and rRNAs, and in ribosome biogenesis. The sequence is that of Interferon-stimulated gene 20 kDa protein (Isg20) from Mus musculus (Mouse).